The following is a 74-amino-acid chain: Exodeoxyribonuclease 7 small subunit (74 aa).

The protein belongs to the XseB family. As to quaternary structure, heterooligomer composed of large and small subunits.

Its subcellular location is the cytoplasm. It carries out the reaction Exonucleolytic cleavage in either 5'- to 3'- or 3'- to 5'-direction to yield nucleoside 5'-phosphates.. Bidirectionally degrades single-stranded DNA into large acid-insoluble oligonucleotides, which are then degraded further into small acid-soluble oligonucleotides. This Symbiobacterium thermophilum (strain DSM 24528 / JCM 14929 / IAM 14863 / T) protein is Exodeoxyribonuclease 7 small subunit.